The primary structure comprises 320 residues: GTP 3',8-cyclase (320 aa).

The Radical SAM core domain occupies 5 to 222 (KLSRPLKVLR…LMKKEFTFYP (218 aa)). R14 is a binding site for GTP. C21, C25, and C28 together coordinate [4Fe-4S] cluster. A GTP-binding site is contributed by R65. G69 contributes to the S-adenosyl-L-methionine binding site. Position 96 (T96) interacts with GTP. S120 contributes to the S-adenosyl-L-methionine binding site. GTP is bound at residue K157. Residue M191 coordinates S-adenosyl-L-methionine. [4Fe-4S] cluster is bound by residues C253 and C256. Position 258 to 260 (258 to 260 (RIR)) interacts with GTP. C270 provides a ligand contact to [4Fe-4S] cluster.

Belongs to the radical SAM superfamily. MoaA family. Monomer and homodimer. [4Fe-4S] cluster is required as a cofactor.

The enzyme catalyses GTP + AH2 + S-adenosyl-L-methionine = (8S)-3',8-cyclo-7,8-dihydroguanosine 5'-triphosphate + 5'-deoxyadenosine + L-methionine + A + H(+). It participates in cofactor biosynthesis; molybdopterin biosynthesis. Catalyzes the cyclization of GTP to (8S)-3',8-cyclo-7,8-dihydroguanosine 5'-triphosphate. In Aquifex aeolicus (strain VF5), this protein is GTP 3',8-cyclase.